The sequence spans 212 residues: Methylthioribulose-1-phosphate dehydratase (212 aa).

H97 and H99 together coordinate Zn(2+).

Belongs to the aldolase class II family. MtnB subfamily. In terms of assembly, homotetramer. Zn(2+) serves as cofactor.

The enzyme catalyses 5-(methylsulfanyl)-D-ribulose 1-phosphate = 5-methylsulfanyl-2,3-dioxopentyl phosphate + H2O. Its pathway is amino-acid biosynthesis; L-methionine biosynthesis via salvage pathway; L-methionine from S-methyl-5-thio-alpha-D-ribose 1-phosphate: step 2/6. Functionally, catalyzes the dehydration of methylthioribulose-1-phosphate (MTRu-1-P) into 2,3-diketo-5-methylthiopentyl-1-phosphate (DK-MTP-1-P). This is Methylthioribulose-1-phosphate dehydratase from Bacillus thuringiensis (strain Al Hakam).